A 190-amino-acid chain; its full sequence is Inosine triphosphate pyrophosphatase (190 aa).

ITP is bound at residue 9–14 (TGNAKK). Mg(2+) is bound at residue Glu39. ITP-binding positions include Lys51, 67–68 (DT), Lys84, 144–147 (FGWD), Lys167, and 172–173 (HR).

Belongs to the HAM1 NTPase family. In terms of assembly, homodimer. Mg(2+) is required as a cofactor. Mn(2+) serves as cofactor.

The protein localises to the cytoplasm. The catalysed reaction is ITP + H2O = IMP + diphosphate + H(+). It carries out the reaction dITP + H2O = dIMP + diphosphate + H(+). The enzyme catalyses XTP + H2O = XMP + diphosphate + H(+). In terms of biological role, pyrophosphatase that hydrolyzes non-canonical purine nucleotides such as inosine triphosphate (ITP), deoxyinosine triphosphate (dITP) or xanthosine 5'-triphosphate (XTP) to their respective monophosphate derivatives. The enzyme does not distinguish between the deoxy- and ribose forms. Probably excludes non-canonical purines from RNA and DNA precursor pools, thus preventing their incorporation into RNA and DNA and avoiding chromosomal lesions. The sequence is that of Inosine triphosphate pyrophosphatase from Pediculus humanus subsp. corporis (Body louse).